Reading from the N-terminus, the 333-residue chain is DNA-directed RNA polymerase subunit alpha (333 aa).

Positions 1 to 233 (MVREKVRVST…DLFIPFLHAE (233 aa)) are alpha N-terminal domain (alpha-NTD). Residues 266–333 (KKEIAFKSIF…DILEIEKHFP (68 aa)) form an alpha C-terminal domain (alpha-CTD) region.

The protein belongs to the RNA polymerase alpha chain family. As to quaternary structure, in plastids the minimal PEP RNA polymerase catalytic core is composed of four subunits: alpha, beta, beta', and beta''. When a (nuclear-encoded) sigma factor is associated with the core the holoenzyme is formed, which can initiate transcription.

The protein localises to the plastid. It localises to the chloroplast. It catalyses the reaction RNA(n) + a ribonucleoside 5'-triphosphate = RNA(n+1) + diphosphate. In terms of biological role, DNA-dependent RNA polymerase catalyzes the transcription of DNA into RNA using the four ribonucleoside triphosphates as substrates. The sequence is that of DNA-directed RNA polymerase subunit alpha from Lotus japonicus (Lotus corniculatus var. japonicus).